The primary structure comprises 957 residues: ADAMTS-like protein 2 (957 aa).

A signal peptide spans 1-29 (MDGRRQHPHWAWSLLAVAVVAGGAAPTEA). The region spanning 47-106 (AYWWGEWTKWTACSRSCGGGVTSQERHCLQQRRKSVPGTGNRTCVGTSKRYQLCRVQECP) is the TSP type-1 1 domain. Disulfide bonds link Cys-59-Cys-100, Cys-63-Cys-105, and Cys-74-Cys-90. N-linked (GlcNAc...) asparagine glycans are attached at residues Asn-87, Asn-374, Asn-435, Asn-482, Asn-518, Asn-530, Asn-539, and Asn-550. A compositionally biased stretch (polar residues) spans 532-544 (SSEAPFPNTSASP). The interval 532 to 568 (SSEAPFPNTSASPPNLAGNRTHKARTRPKARKQGVSP) is disordered. Positions 551–563 (RTHKARTRPKARK) are enriched in basic residues. 6 consecutive TSP type-1 domains span residues 570–624 (DMYR…EFCA), 628–692 (CQPR…PACG), 694–742 (QWEM…TGPP), 743–801 (CDRQ…KNCP), 803–857 (HWLA…TCFE), and 859–914 (PCFK…QPCP). N-linked (GlcNAc...) asparagine glycosylation is present at Asn-737. Asn-813 carries an N-linked (GlcNAc...) asparagine glycan. One can recognise a PLAC domain in the interval 918–956 (PDDSCQDQPGTNCALAIKVNLCGHWYYSKACCRSCRPPH).

In terms of assembly, interacts with LTBP1. In terms of processing, glycosylated. Can be O-fucosylated by POFUT2 on a serine or a threonine residue found within the consensus sequence C1-X(2)-(S/T)-C2-G of the TSP type-1 repeat domains where C1 and C2 are the first and second cysteine residue of the repeat, respectively. Fucosylated repeats can then be further glycosylated by the addition of a beta-1,3-glucose residue by the glucosyltransferase, B3GALTL. Fucosylation mediates the efficient secretion of ADAMTS family members. Can also be C-glycosylated with one or two mannose molecules on tryptophan residues within the consensus sequence W-X-X-W of the TPRs, and N-glycosylated. These other glycosylations can also facilitate secretion.

It is found in the secreted. In Mus musculus (Mouse), this protein is ADAMTS-like protein 2 (Adamtsl2).